A 143-amino-acid chain; its full sequence is Putative transmembrane protein ORF32 (143 aa).

The next 2 helical transmembrane spans lie at 20–42 (GISG…SFTL) and 52–74 (WPLI…EGGV).

It is found in the host membrane. In Haloarcula hispanica (His1V), this protein is Putative transmembrane protein ORF32.